The sequence spans 550 residues: MSTWWLVVVAAAAAAGLVRAEDRYHPERLAAGEASAATRSAAESEASFWVREAQEAIERREREGAGAKQAAGHAKNVVMFLGDGMSVPTLAAARTLLGQRRGQTGEEASLHFEQFPTLGLAKTYCVNAQVPDSSCTATAYLCGVKANQGTLGVTAAVPRHDCEASTDVTKRVQSIAEWALADGRDVGIVTTTRITHASPAGTFAKVANRNWENDNDVKQEGHDVNRCPDIAHQLIKMAPGNKFKVIFGGGRREFLPTTQVDEEGTRGLRTDGRNLIEEWQNDKESQKVSYKYLWNRQELLKLGSSPPDYLLGLFEGSHLQYHLEGDESTEPTLAELTDVAIRVLSRNERGFFLFVEGGRIDHAHHDNYAHLALDETIEMDRAVKVATDALKEDESLVVVTADHTHVMSFNGYSPRGTDVLGTVRSLDSNRMPFMVLSYTNGPGARIQQNGVRPDVTTDANFGALRWRTHTDVPLDSETHGGDDVTVFAWGVHHWMFSGLYEQTHVPHRMAWAACMGPGRHVCVSAATVPTAALLSLLLAAFITLRHQCFL.

An N-terminal signal peptide occupies residues 1-39; it reads MSTWWLVVVAAAAAAGLVRAEDRYHPERLAAGEASAATR. Mg(2+) is bound at residue D83. D83 lines the Zn(2+) pocket. The Phosphoserine intermediate role is filled by S133. 3 residues coordinate Mg(2+): H196, S198, and E356. 5 residues coordinate Zn(2+): D361, H365, D402, H403, and H479. A lipid anchor (GPI-anchor amidated serine) is attached at S524. A propeptide spans 525 to 550 (removed in mature form); it reads AATVPTAALLSLLLAAFITLRHQCFL.

Belongs to the alkaline phosphatase family. Requires Mg(2+) as cofactor. Zn(2+) serves as cofactor. In terms of tissue distribution, midgut.

The protein resides in the cell membrane. The enzyme catalyses a phosphate monoester + H2O = an alcohol + phosphate. This chain is Membrane-bound alkaline phosphatase (Alp-m), found in Bombyx mori (Silk moth).